Consider the following 298-residue polypeptide: Lactose transport system permease protein LacF (298 aa).

6 consecutive transmembrane segments (helical) span residues 17–37 (GWLFVAPAIALISVFMLYPIL), 77–97 (VIFFVVQVPIMITMALILAAM), 112–132 (MIFLPCVSSLVAYSILFKSMF), 151–171 (PIGWLTDPFWAKVLIIIAITW), 208–228 (AFLTIPMLKPVILFTTITSTI), and 269–289 (FSYAATVSYVIVLMVAVLSFL). The ABC transmembrane type-1 domain maps to 73-290 (LQNTVIFFVV…LMVAVLSFLQ (218 aa)).

The protein belongs to the binding-protein-dependent transport system permease family. MalFG subfamily.

The protein resides in the cell inner membrane. Part of the binding-protein-dependent transport system for lactose. Probably responsible for the translocation of the substrate across the membrane. The chain is Lactose transport system permease protein LacF (lacF) from Rhizobium radiobacter (Agrobacterium tumefaciens).